The primary structure comprises 182 residues: Large ribosomal subunit protein uL5 (182 aa).

The protein belongs to the universal ribosomal protein uL5 family. Part of the 50S ribosomal subunit; part of the 5S rRNA/L5/L18/L25 subcomplex. Contacts the 5S rRNA and the P site tRNA. Forms a bridge to the 30S subunit in the 70S ribosome.

In terms of biological role, this is one of the proteins that bind and probably mediate the attachment of the 5S RNA into the large ribosomal subunit, where it forms part of the central protuberance. In the 70S ribosome it contacts protein S13 of the 30S subunit (bridge B1b), connecting the 2 subunits; this bridge is implicated in subunit movement. Contacts the P site tRNA; the 5S rRNA and some of its associated proteins might help stabilize positioning of ribosome-bound tRNAs. This Thermus aquaticus protein is Large ribosomal subunit protein uL5.